A 410-amino-acid chain; its full sequence is Peptidase T (410 aa).

Residue His79 coordinates Zn(2+). Residue Asp81 is part of the active site. Asp142 contributes to the Zn(2+) binding site. The active-site Proton acceptor is Glu176. The Zn(2+) site is built by Glu177, Asp199, and His381.

This sequence belongs to the peptidase M20B family. The cofactor is Zn(2+).

The protein resides in the cytoplasm. It catalyses the reaction Release of the N-terminal residue from a tripeptide.. In terms of biological role, cleaves the N-terminal amino acid of tripeptides. This is Peptidase T from Bacillus velezensis (strain DSM 23117 / BGSC 10A6 / LMG 26770 / FZB42) (Bacillus amyloliquefaciens subsp. plantarum).